The following is a 201-amino-acid chain: Small ribosomal subunit protein uS4c (201 aa).

Residues 89–152 (MRLDNILFRL…NSRTLVQNLI (64 aa)) form the S4 RNA-binding domain.

Belongs to the universal ribosomal protein uS4 family. In terms of assembly, part of the 30S ribosomal subunit. Contacts protein S5. The interaction surface between S4 and S5 is involved in control of translational fidelity.

It localises to the plastid. Its subcellular location is the chloroplast. Its function is as follows. One of the primary rRNA binding proteins, it binds directly to 16S rRNA where it nucleates assembly of the body of the 30S subunit. In terms of biological role, with S5 and S12 plays an important role in translational accuracy. The protein is Small ribosomal subunit protein uS4c (rps4) of Crucihimalaya wallichii (Rock-cress).